The chain runs to 1098 residues: Sister-chromatid cohesion protein 3 (1098 aa).

The segment at 1–68 (MEDSPQGLKR…RSRTHPPQQN (68 aa)) is disordered. Positions 245–265 (RVDSLNKRLSVTHEQITTLED) form a coiled coil. An SCD domain is found at 275-360 (FVHRYRDIDN…QRFSNRMIEM (86 aa)). Coiled-coil stretches lie at residues 632–653 (KLKDLEDELLDKITSAIREVKD), 888–908 (LESLKRAYHRYSSELSSGREE), and 1009–1032 (LETLEEKCLKNEDLQDDKEAANVR). The segment at 1027 to 1077 (EAANVRRRGRPRKRPETERKRLFDEQSGSDEDESISGGSDREDKLDEDAPL) is disordered. A compositionally biased stretch (basic and acidic residues) spans 1040–1050 (RPETERKRLFD).

It belongs to the SCC3 family. As to quaternary structure, part of the cohesin complex. Interacts with DEK3. As to expression, expressed in roots, mature leaves, buds and seedlings.

It is found in the nucleus. It localises to the chromosome. Functionally, essential component of cohesin complex, a complex required for the cohesion of sister chromatids after DNA replication. The cohesin complex apparently forms a large proteinaceous ring within which sister chromatids can be trapped. At anaphase, the complex is cleaved and dissociates from chromatin, allowing sister chromatids to segregate. The cohesin complex may also play a role in spindle pole assembly during mitosis. Required for centromere cohesion maintenance at anaphase I and for the monopolar orientation of the kinetochores during both male and female meiosis. Also involved in mitosis. The protein is Sister-chromatid cohesion protein 3 of Arabidopsis thaliana (Mouse-ear cress).